We begin with the raw amino-acid sequence, 429 residues long: Adenylosuccinate synthetase (429 aa).

Residues 12 to 18 (GDEGKGK) and 40 to 42 (GHT) each bind GTP. Catalysis depends on D13, which acts as the Proton acceptor. D13 and G40 together coordinate Mg(2+). IMP contacts are provided by residues 13–16 (DEGK), 38–41 (NAGH), T128, R142, Q223, T238, and R302. Residue H41 is the Proton donor of the active site. A substrate-binding site is contributed by 298–304 (TTTGRPR). Residues R304, 330 to 332 (SID), and 412 to 414 (SVG) each bind GTP.

It belongs to the adenylosuccinate synthetase family. As to quaternary structure, homodimer. Requires Mg(2+) as cofactor.

It localises to the cytoplasm. It catalyses the reaction IMP + L-aspartate + GTP = N(6)-(1,2-dicarboxyethyl)-AMP + GDP + phosphate + 2 H(+). It functions in the pathway purine metabolism; AMP biosynthesis via de novo pathway; AMP from IMP: step 1/2. Its function is as follows. Plays an important role in the de novo pathway of purine nucleotide biosynthesis. Catalyzes the first committed step in the biosynthesis of AMP from IMP. This Bacillus cytotoxicus (strain DSM 22905 / CIP 110041 / 391-98 / NVH 391-98) protein is Adenylosuccinate synthetase.